Here is a 370-residue protein sequence, read N- to C-terminus: MVIDPRDFLLSSYDYELNSSLIAQEPIEPRHNARMLHVSKRSGEGLKAFHLKVWDLLAELRAGDLLVMNDTRVLKARLKVRLRNGTFVELFLLEPKGQGRWLCLAKPAKKLRAGDCIWMESSGEESIPLKIIDQDISTGGRIVQFPELFSDRRKIEPLLEKFGEIPLPPYINRCDFKDVNRYQTRYASTPGAVAAPTAGLHLSDQFLEALSQQGIKDAKVTLHVGLGTFRPLVEENLANLHLHSEWVEVKEEVVSAIKECRDRGGRVIAIGTTTVRSLEASFLAGDGCLKPFKGEVDLVIKPGYKFGIVDGLLTNFHLPKSSLLLLVSALIGRENLLELYKEAIDQKYRFFSYGDAMFISPEGVLPSARL.

The protein belongs to the QueA family. In terms of assembly, monomer.

Its subcellular location is the cytoplasm. The enzyme catalyses 7-aminomethyl-7-carbaguanosine(34) in tRNA + S-adenosyl-L-methionine = epoxyqueuosine(34) in tRNA + adenine + L-methionine + 2 H(+). It participates in tRNA modification; tRNA-queuosine biosynthesis. Functionally, transfers and isomerizes the ribose moiety from AdoMet to the 7-aminomethyl group of 7-deazaguanine (preQ1-tRNA) to give epoxyqueuosine (oQ-tRNA). In Prochlorococcus marinus (strain SARG / CCMP1375 / SS120), this protein is S-adenosylmethionine:tRNA ribosyltransferase-isomerase.